A 371-amino-acid polypeptide reads, in one-letter code: Cytochrome b (371 aa).

The next 4 membrane-spanning stretches (helical) occupy residues 25 to 45 (FGSM…FLAI), 69 to 90 (WMMQ…YIHI), 105 to 125 (WMSG…GYVL), and 170 to 190 (FFAL…LHII). Heme b contacts are provided by His75 and His89. 2 residues coordinate heme b: His174 and His188. A ubiquinone is bound at residue His193. A run of 4 helical transmembrane segments spans residues 218–238 (HKDL…VSFL), 280–300 (LGGA…PFTH), 312–332 (LSQL…WAAT), and 339–358 (FIII…LSTP).

Belongs to the cytochrome b family. As to quaternary structure, the cytochrome bc1 complex contains 3 respiratory subunits (MT-CYB, CYC1 and UQCRFS1), 2 core proteins (UQCRC1 and UQCRC2) and probably 6 low-molecular weight proteins. It depends on heme b as a cofactor.

The protein localises to the mitochondrion inner membrane. In terms of biological role, component of the ubiquinol-cytochrome c reductase complex (complex III or cytochrome b-c1 complex) that is part of the mitochondrial respiratory chain. The b-c1 complex mediates electron transfer from ubiquinol to cytochrome c. Contributes to the generation of a proton gradient across the mitochondrial membrane that is then used for ATP synthesis. The chain is Cytochrome b (MT-CYB) from Antaresia maculosa (Eastern small blotched python).